Here is a 349-residue protein sequence, read N- to C-terminus: Isopentenyl-diphosphate delta-isomerase (349 aa).

9–10 contributes to the substrate binding site; that stretch reads RK. Residues 65-67, Ser95, and Asn124 each bind FMN; that span reads AMT. 95–97 provides a ligand contact to substrate; it reads STH. Position 154 (Gln154) interacts with substrate. Glu155 provides a ligand contact to Mg(2+). FMN-binding positions include Lys186, Ser211, Thr216, 262–264, and 283–284; these read GLR and SR.

Belongs to the IPP isomerase type 2 family. As to quaternary structure, homooctamer. Dimer of tetramers. The cofactor is FMN. NADPH serves as cofactor. Mg(2+) is required as a cofactor.

It localises to the cytoplasm. The enzyme catalyses isopentenyl diphosphate = dimethylallyl diphosphate. Involved in the biosynthesis of isoprenoids. Catalyzes the 1,3-allylic rearrangement of the homoallylic substrate isopentenyl (IPP) to its allylic isomer, dimethylallyl diphosphate (DMAPP). In Staphylococcus aureus (strain JH1), this protein is Isopentenyl-diphosphate delta-isomerase.